Here is a 157-residue protein sequence, read N- to C-terminus: Protein Smg homolog (157 aa).

The protein belongs to the Smg family.

This chain is Protein Smg homolog, found in Aeromonas salmonicida (strain A449).